A 690-amino-acid polypeptide reads, in one-letter code: UvrABC system protein C (690 aa).

The disordered stretch occupies residues Met-1–Ala-60. The segment covering Glu-41–Thr-58 has biased composition (acidic residues). One can recognise a GIY-YIG domain in the interval Thr-82–Val-160. The 36-residue stretch at Arg-270 to Ile-305 folds into the UVR domain.

This sequence belongs to the UvrC family. Interacts with UvrB in an incision complex.

The protein localises to the cytoplasm. In terms of biological role, the UvrABC repair system catalyzes the recognition and processing of DNA lesions. UvrC both incises the 5' and 3' sides of the lesion. The N-terminal half is responsible for the 3' incision and the C-terminal half is responsible for the 5' incision. The polypeptide is UvrABC system protein C (Nitrobacter hamburgensis (strain DSM 10229 / NCIMB 13809 / X14)).